Here is a 143-residue protein sequence, read N- to C-terminus: Flagellar assembly factor FliW (143 aa).

It belongs to the FliW family. Interacts with translational regulator CsrA and flagellin(s).

It is found in the cytoplasm. Its function is as follows. Acts as an anti-CsrA protein, binds CsrA and prevents it from repressing translation of its target genes, one of which is flagellin. Binds to flagellin and participates in the assembly of the flagellum. The sequence is that of Flagellar assembly factor FliW from Bacillus velezensis (strain DSM 23117 / BGSC 10A6 / LMG 26770 / FZB42) (Bacillus amyloliquefaciens subsp. plantarum).